We begin with the raw amino-acid sequence, 314 residues long: Oxaloacetate tautomerase FAHD2A, mitochondrial (314 aa).

The transit peptide at 1 to 84 (MLVSGRRRLL…ATLSVARRAL (84 aa)) directs the protein to the mitochondrion. Mg(2+) contacts are provided by E159, E161, and D190.

This sequence belongs to the FAH family. Mg(2+) is required as a cofactor. It depends on Mn(2+) as a cofactor.

It is found in the mitochondrion. It carries out the reaction oxaloacetate = enol-oxaloacetate. In terms of biological role, tautomerase that converts enol-oxaloacetate, a strong inhibitor of succinate dehydrogenase, to the physiological keto form of oxaloacetate. It is thereby required to maximize aerobic respiration efficiency by preventing succinate dehydrogenase inhibition. The chain is Oxaloacetate tautomerase FAHD2A, mitochondrial from Homo sapiens (Human).